The primary structure comprises 406 residues: Arginine deiminase (406 aa).

Cys396 serves as the catalytic Amidino-cysteine intermediate.

This sequence belongs to the arginine deiminase family.

It is found in the cytoplasm. The enzyme catalyses L-arginine + H2O = L-citrulline + NH4(+). It functions in the pathway amino-acid degradation; L-arginine degradation via ADI pathway; carbamoyl phosphate from L-arginine: step 1/2. This Aliivibrio salmonicida (strain LFI1238) (Vibrio salmonicida (strain LFI1238)) protein is Arginine deiminase.